The sequence spans 457 residues: Cysteine--tRNA ligase (457 aa).

Cys27 contacts Zn(2+). The 'HIGH' region signature appears at 29-39 (PTVYDFAHIGN). Residues Cys211, His236, and Glu240 each contribute to the Zn(2+) site. The 'KMSKS' region motif lies at 269-273 (KMSKS). Lys272 serves as a coordination point for ATP.

The protein belongs to the class-I aminoacyl-tRNA synthetase family. In terms of assembly, monomer. The cofactor is Zn(2+).

It localises to the cytoplasm. The catalysed reaction is tRNA(Cys) + L-cysteine + ATP = L-cysteinyl-tRNA(Cys) + AMP + diphosphate. In Ehrlichia ruminantium (strain Gardel), this protein is Cysteine--tRNA ligase.